Reading from the N-terminus, the 286-residue chain is Bifunctional protein FolD (286 aa).

Residues 164–166 (GTS) and isoleucine 230 contribute to the NADP(+) site.

It belongs to the tetrahydrofolate dehydrogenase/cyclohydrolase family. As to quaternary structure, homodimer.

It catalyses the reaction (6R)-5,10-methylene-5,6,7,8-tetrahydrofolate + NADP(+) = (6R)-5,10-methenyltetrahydrofolate + NADPH. The enzyme catalyses (6R)-5,10-methenyltetrahydrofolate + H2O = (6R)-10-formyltetrahydrofolate + H(+). It participates in one-carbon metabolism; tetrahydrofolate interconversion. Its function is as follows. Catalyzes the oxidation of 5,10-methylenetetrahydrofolate to 5,10-methenyltetrahydrofolate and then the hydrolysis of 5,10-methenyltetrahydrofolate to 10-formyltetrahydrofolate. The protein is Bifunctional protein FolD of Mesoplasma florum (strain ATCC 33453 / NBRC 100688 / NCTC 11704 / L1) (Acholeplasma florum).